We begin with the raw amino-acid sequence, 117 residues long: Large ribosomal subunit protein uL18 (117 aa).

It belongs to the universal ribosomal protein uL18 family. As to quaternary structure, part of the 50S ribosomal subunit; part of the 5S rRNA/L5/L18/L25 subcomplex. Contacts the 5S and 23S rRNAs.

This is one of the proteins that bind and probably mediate the attachment of the 5S RNA into the large ribosomal subunit, where it forms part of the central protuberance. This chain is Large ribosomal subunit protein uL18, found in Yersinia pseudotuberculosis serotype O:1b (strain IP 31758).